The sequence spans 184 residues: ATP synthase subunit delta (184 aa).

It belongs to the ATPase delta chain family. As to quaternary structure, F-type ATPases have 2 components, F(1) - the catalytic core - and F(0) - the membrane proton channel. F(1) has five subunits: alpha(3), beta(3), gamma(1), delta(1), epsilon(1). F(0) has three main subunits: a(1), b(2) and c(10-14). The alpha and beta chains form an alternating ring which encloses part of the gamma chain. F(1) is attached to F(0) by a central stalk formed by the gamma and epsilon chains, while a peripheral stalk is formed by the delta and b chains.

The protein localises to the cell inner membrane. Functionally, f(1)F(0) ATP synthase produces ATP from ADP in the presence of a proton or sodium gradient. F-type ATPases consist of two structural domains, F(1) containing the extramembraneous catalytic core and F(0) containing the membrane proton channel, linked together by a central stalk and a peripheral stalk. During catalysis, ATP synthesis in the catalytic domain of F(1) is coupled via a rotary mechanism of the central stalk subunits to proton translocation. This protein is part of the stalk that links CF(0) to CF(1). It either transmits conformational changes from CF(0) to CF(1) or is implicated in proton conduction. This chain is ATP synthase subunit delta, found in Rickettsia peacockii (strain Rustic).